Here is a 128-residue protein sequence, read N- to C-terminus: Neuromedin-S (128 aa).

Residues 1-27 (MRSEKHLLPLPPLLAICCLGTLHLSSG) form the signal peptide. 2 consecutive propeptides follow at residues 28–72 (FPQS…HEIY) and 75–100 (FLFQFSRAKDPSLKIGESQIATAEYT). Position 119 is an asparagine amide (N119). The propeptide occupies 123–128 (VSINEH).

The protein belongs to the NmU family. In terms of tissue distribution, expressed by the skin glands.

It is found in the secreted. Neuromedin-S-17: stimulates uterine smooth muscle contraction (B similarity). Synthetic peptide NmS-17 induces calcium mobilization in CHO cells transfected with either human FM-3/GPR66 (EC(50)=0.085 nM) or FM-4/TGR-1 (EC(50)=0.231 nM) NmU/NmS receptors. This is Neuromedin-S (nms) from Bombina variegata (Yellow-bellied toad).